The sequence spans 176 residues: Adenine phosphoribosyltransferase (176 aa).

It belongs to the purine/pyrimidine phosphoribosyltransferase family. In terms of assembly, homodimer.

Its subcellular location is the cytoplasm. The catalysed reaction is AMP + diphosphate = 5-phospho-alpha-D-ribose 1-diphosphate + adenine. It functions in the pathway purine metabolism; AMP biosynthesis via salvage pathway; AMP from adenine: step 1/1. Catalyzes a salvage reaction resulting in the formation of AMP, that is energically less costly than de novo synthesis. The polypeptide is Adenine phosphoribosyltransferase (Leuconostoc mesenteroides subsp. mesenteroides (strain ATCC 8293 / DSM 20343 / BCRC 11652 / CCM 1803 / JCM 6124 / NCDO 523 / NBRC 100496 / NCIMB 8023 / NCTC 12954 / NRRL B-1118 / 37Y)).